A 270-amino-acid chain; its full sequence is 4-hydroxy-tetrahydrodipicolinate reductase (270 aa).

Residues 8–13 (GALGRM), D34, 102–104 (GTT), and 128–131 (SQNY) contribute to the NAD(+) site. The Proton donor/acceptor role is filled by H160. H161 serves as a coordination point for (S)-2,3,4,5-tetrahydrodipicolinate. The active-site Proton donor is K164. 170 to 171 (GT) contacts (S)-2,3,4,5-tetrahydrodipicolinate.

The protein belongs to the DapB family.

Its subcellular location is the cytoplasm. The catalysed reaction is (S)-2,3,4,5-tetrahydrodipicolinate + NAD(+) + H2O = (2S,4S)-4-hydroxy-2,3,4,5-tetrahydrodipicolinate + NADH + H(+). It carries out the reaction (S)-2,3,4,5-tetrahydrodipicolinate + NADP(+) + H2O = (2S,4S)-4-hydroxy-2,3,4,5-tetrahydrodipicolinate + NADPH + H(+). Its pathway is amino-acid biosynthesis; L-lysine biosynthesis via DAP pathway; (S)-tetrahydrodipicolinate from L-aspartate: step 4/4. Its function is as follows. Catalyzes the conversion of 4-hydroxy-tetrahydrodipicolinate (HTPA) to tetrahydrodipicolinate. The polypeptide is 4-hydroxy-tetrahydrodipicolinate reductase (Methanococcus maripaludis (strain C5 / ATCC BAA-1333)).